We begin with the raw amino-acid sequence, 683 residues long: Glycine--tRNA ligase beta subunit (683 aa).

It belongs to the class-II aminoacyl-tRNA synthetase family. Tetramer of two alpha and two beta subunits.

It localises to the cytoplasm. It carries out the reaction tRNA(Gly) + glycine + ATP = glycyl-tRNA(Gly) + AMP + diphosphate. This is Glycine--tRNA ligase beta subunit from Pseudomonas putida (strain GB-1).